The sequence spans 738 residues: Protein Aster-B (738 aa).

Residues 1 to 81 form a disordered region; the sequence is MKGFKLSCTA…SGGKNSKKSQ (81 aa). Positions 8 to 19 are enriched in polar residues; that stretch reads CTASNSNRSTPA. Phosphoserine is present on residues Ser-28 and Ser-30. The span at 41-51 shows a compositional bias: basic and acidic residues; the sequence is MVEKGSDHSSD. The segment covering 59–70 has biased composition (low complexity); the sequence is QGVQRSCSSQSG. Positions 96 to 163 constitute a GRAM domain; sequence EDFRKLFKQL…KDICSMTKEK (68 aa). The disordered stretch occupies residues 254–299; the sequence is EENEVNDSSSKSSIETKPDASPQLPKKSITNSTLTSTGSSEAPVSF. Positions 259-268 are enriched in polar residues; sequence NDSSSKSSIE. Position 274 is a phosphoserine (Ser-274). Residues 281–295 show a composition bias toward polar residues; it reads SITNSTLTSTGSSEA. Residues 372-543 enclose the VASt domain; it reads SGRQYVNEVF…ELTKTESTYL (172 aa). A Phosphotyrosine modification is found at Tyr-389. 2 positions are modified to phosphoserine: Ser-550 and Ser-581. Phosphothreonine occurs at positions 584, 585, and 587. Residues 623 to 643 traverse the membrane as a helical segment; sequence LLLVISCVICFSLVLLVVLNM.

As to expression, highly expressed in the adrenal gland (at protein level) and brain. Also found in the kidney, testis and macrophages.

The protein resides in the endoplasmic reticulum membrane. Its subcellular location is the cell membrane. Functionally, cholesterol transporter that mediates non-vesicular transport of cholesterol from the plasma membrane (PM) to the endoplasmic reticulum (ER). Contains unique domains for binding cholesterol and the PM, thereby serving as a molecular bridge for the transfer of cholesterol from the PM to the ER. Plays a crucial role in cholesterol homeostasis in the adrenal gland and has the unique ability to localize to the PM based on the level of membrane cholesterol. In lipid-poor conditions localizes to the ER membrane and in response to excess cholesterol in the PM is recruited to the endoplasmic reticulum-plasma membrane contact sites (EPCS) which is mediated by the GRAM domain. At the EPCS, the sterol-binding VASt/ASTER domain binds to the cholesterol in the PM and facilitates its transfer from the PM to ER. The chain is Protein Aster-B (Gramd1b) from Mus musculus (Mouse).